Here is a 316-residue protein sequence, read N- to C-terminus: Nucleoside diphosphate-linked moiety X motif 6 (316 aa).

The region spanning Ser141 to Tyr273 is the Nudix hydrolase domain. The Nudix box motif lies at Gly176–Gly197.

Belongs to the Nudix hydrolase family. Monomer and homodimer. As to expression, detected in liver, kidney and esophagus (at protein level). Ubiquitous.

It localises to the cytoplasm. The protein resides in the nucleus. Its subcellular location is the mitochondrion. In terms of biological role, may contribute to the regulation of cell proliferation. This is Nucleoside diphosphate-linked moiety X motif 6 (NUDT6) from Homo sapiens (Human).